A 189-amino-acid polypeptide reads, in one-letter code: MAKLIVGLGNPGPRYAATRHNAGWMLLDAFARKHGVAIEQRGFEGLYGELRWGAEAEKVILLKPLTYMNLSGRSVAQAARFYRIAPADILVLFDDLDLEPGRLRLRAKGSAGGHNGVKSVIAELGTAEFPRLRIGIGRPAPGWEVIDWVLAPFGPDDAAAVAAALPRAVEAVECFLTEGILAAMNRYNT.

Tyrosine 15 lines the tRNA pocket. Residue histidine 20 is the Proton acceptor of the active site. 3 residues coordinate tRNA: tyrosine 67, asparagine 69, and asparagine 115.

Belongs to the PTH family. Monomer.

It localises to the cytoplasm. The enzyme catalyses an N-acyl-L-alpha-aminoacyl-tRNA + H2O = an N-acyl-L-amino acid + a tRNA + H(+). In terms of biological role, hydrolyzes ribosome-free peptidyl-tRNAs (with 1 or more amino acids incorporated), which drop off the ribosome during protein synthesis, or as a result of ribosome stalling. Its function is as follows. Catalyzes the release of premature peptidyl moieties from peptidyl-tRNA molecules trapped in stalled 50S ribosomal subunits, and thus maintains levels of free tRNAs and 50S ribosomes. The chain is Peptidyl-tRNA hydrolase from Symbiobacterium thermophilum (strain DSM 24528 / JCM 14929 / IAM 14863 / T).